Consider the following 476-residue polypeptide: Scopoletin glucosyltransferase (476 aa).

The Proton acceptor role is filled by His16. His16 provides a ligand contact to an anthocyanidin. Asp119 functions as the Charge relay in the catalytic mechanism. UDP-alpha-D-glucose-binding residues include Ala343, Gln345, His360, Trp363, Asn364, Ser365, and Glu368. Position 383 (Ala383) interacts with an anthocyanidin. The UDP-alpha-D-glucose site is built by Glu384 and Gln385.

The protein belongs to the UDP-glycosyltransferase family.

The enzyme catalyses scopoletin + UDP-alpha-D-glucose = scopolin + UDP + H(+). Its function is as follows. Glucosyltransferase acting preferentially on aromatic substrates of the phenylpropanoid types. The best substrates are scopoletin and esculetin. Required for full resistance to virus. This Nicotiana tabacum (Common tobacco) protein is Scopoletin glucosyltransferase (TOGT1).